The following is a 637-amino-acid chain: 1-deoxy-D-xylulose-5-phosphate synthase (637 aa).

Thiamine diphosphate contacts are provided by residues His73 and 113–115 (SHA). A Mg(2+)-binding site is contributed by Asp144. Residues 145–146 (GA), Asn174, Tyr285, and Glu366 contribute to the thiamine diphosphate site. Asn174 contacts Mg(2+).

The protein belongs to the transketolase family. DXPS subfamily. In terms of assembly, homodimer. Mg(2+) serves as cofactor. The cofactor is thiamine diphosphate.

The enzyme catalyses D-glyceraldehyde 3-phosphate + pyruvate + H(+) = 1-deoxy-D-xylulose 5-phosphate + CO2. It functions in the pathway metabolic intermediate biosynthesis; 1-deoxy-D-xylulose 5-phosphate biosynthesis; 1-deoxy-D-xylulose 5-phosphate from D-glyceraldehyde 3-phosphate and pyruvate: step 1/1. Functionally, catalyzes the acyloin condensation reaction between C atoms 2 and 3 of pyruvate and glyceraldehyde 3-phosphate to yield 1-deoxy-D-xylulose-5-phosphate (DXP). This Streptomyces griseus subsp. griseus (strain JCM 4626 / CBS 651.72 / NBRC 13350 / KCC S-0626 / ISP 5235) protein is 1-deoxy-D-xylulose-5-phosphate synthase.